Reading from the N-terminus, the 90-residue chain is MALVRSLLVAKKILSRSAAAVSAPPKGFLAVYVGESQKKRYLVPLSYLNQPSFQALLSKSEEEFGFDHPMGGLTIPCPEDTFINVTSRLH.

The protein belongs to the ARG7 family.

The protein localises to the cell membrane. Functionally, functions as a positive effector of cell expansion through modulation of auxin transport. The polypeptide is Auxin-responsive protein SAUR23 (Arabidopsis thaliana (Mouse-ear cress)).